A 188-amino-acid polypeptide reads, in one-letter code: Probable manganese efflux pump MntP (188 aa).

The next 6 membrane-spanning stretches (helical) occupy residues tyrosine 3 to glycine 23, leucine 41 to alanine 61, leucine 66 to isoleucine 86, tryptophan 106 to phenylalanine 128, alanine 143 to glycine 163, and isoleucine 168 to glycine 188.

It belongs to the MntP (TC 9.B.29) family.

The protein resides in the cell inner membrane. In terms of biological role, probably functions as a manganese efflux pump. This Salmonella heidelberg (strain SL476) protein is Probable manganese efflux pump MntP.